The sequence spans 430 residues: GTPase Obg (430 aa).

In terms of domain architecture, Obg spans 1–158 (MFVDQVKISL…LEVTLELKLL (158 aa)). The interval 118 to 145 (RGGRGGRGNSRFATPRNPAPDFSENGEP) is disordered. Residues 159–329 (ADVGLVGFPS…LLYQIADKLE (171 aa)) form the OBG-type G domain. GTP contacts are provided by residues 165–172 (GFPSVGKS), 190–194 (FTTIK), 212–215 (DLPG), 282–285 (NKMD), and 310–312 (STI). Mg(2+) contacts are provided by Ser172 and Thr192. The 79-residue stretch at 352–430 (KHTPSADKFT…ILGGEFEFVE (79 aa)) folds into the OCT domain.

The protein belongs to the TRAFAC class OBG-HflX-like GTPase superfamily. OBG GTPase family. As to quaternary structure, monomer. Requires Mg(2+) as cofactor.

The protein resides in the cytoplasm. Functionally, an essential GTPase which binds GTP, GDP and possibly (p)ppGpp with moderate affinity, with high nucleotide exchange rates and a fairly low GTP hydrolysis rate. Plays a role in control of the cell cycle, stress response, ribosome biogenesis and in those bacteria that undergo differentiation, in morphogenesis control. The polypeptide is GTPase Obg (Staphylococcus epidermidis (strain ATCC 12228 / FDA PCI 1200)).